A 231-amino-acid chain; its full sequence is 7-cyano-7-deazaguanine synthase (231 aa).

Phe8–Leu18 lines the ATP pocket. Zn(2+) is bound by residues Cys188, Cys197, Cys200, and Cys203.

The protein belongs to the QueC family. Zn(2+) serves as cofactor.

The enzyme catalyses 7-carboxy-7-deazaguanine + NH4(+) + ATP = 7-cyano-7-deazaguanine + ADP + phosphate + H2O + H(+). It participates in purine metabolism; 7-cyano-7-deazaguanine biosynthesis. Functionally, catalyzes the ATP-dependent conversion of 7-carboxy-7-deazaguanine (CDG) to 7-cyano-7-deazaguanine (preQ(0)). The chain is 7-cyano-7-deazaguanine synthase from Salmonella agona (strain SL483).